Consider the following 552-residue polypeptide: MDIKRTVLWVIFFMSAVMLYDNWQRDHGRPSMFFPSATHTAPAAAGGASGTSATTAGDVPAAAAGAAPSTTAPAAQAQLVKFSTDVYDGEIDTRGGTLAKLTLKKQGDGKQPDLYITLFDHTAGHTYLARTGLLGGDFPNHNDVYTQLNPGSTSLTGDENTLKLSFESPVKGGVKVVKTYTFTRGSYVIGVDTKIDNVGTAPVTPTVYMELVRDNTAVETPMFSHTFLGPAVYTDAKHFQKIDFSDLDKNKANFEKSSDNGWVAMVQHYFASAWIPQQGAKRDIYAEKIDPTLYRVGVKQPVAAIAPGQSADVQARLFAGPEEERMLEGIAPGLELVKDYGWVTIIAKPLFWLLEKIHGYVGNWGWAIVLLTVLIKAVFFPLSAASYKSMARMKEITPRMQALRERFKSDPQKMNAALMELYKTEKVNPFGGCLPVVIQIPVFISLYWVLLASVEMRGAPWILWIHDLSQRDPFFILPVLMAVSMFVQTSLNPTPPDPVQAKMMKFMPIAFSVMFFFFPAGLVLYYVVNNVLSIAQQYYITRKLGGVKKKPA.

The next 5 membrane-spanning stretches (helical) occupy residues 7–24 (VLWV…DNWQ), 364–384 (WGWA…PLSA), 434–454 (LPVV…LASV), 473–493 (PFFI…SLNP), and 508–528 (PIAF…YYVV).

Belongs to the OXA1/ALB3/YidC family. Type 1 subfamily. Interacts with the Sec translocase complex via SecD. Specifically interacts with transmembrane segments of nascent integral membrane proteins during membrane integration.

It localises to the cell inner membrane. In terms of biological role, required for the insertion and/or proper folding and/or complex formation of integral membrane proteins into the membrane. Involved in integration of membrane proteins that insert both dependently and independently of the Sec translocase complex, as well as at least some lipoproteins. Aids folding of multispanning membrane proteins. The protein is Membrane protein insertase YidC of Burkholderia cenocepacia (strain HI2424).